Consider the following 432-residue polypeptide: Putative D-alanyl-D-alanine carboxypeptidase (432 aa).

A helical; Signal-anchor transmembrane segment spans residues 7 to 25; sequence ATVLLTFSLSAFAVEYPVL.

This sequence belongs to the peptidase S12 family. YfeW subfamily.

Its subcellular location is the cell inner membrane. The catalysed reaction is Preferential cleavage: (Ac)2-L-Lys-D-Ala-|-D-Ala. Also transpeptidation of peptidyl-alanyl moieties that are N-acyl substituents of D-alanine.. In Salmonella schwarzengrund (strain CVM19633), this protein is Putative D-alanyl-D-alanine carboxypeptidase.